A 410-amino-acid chain; its full sequence is S-adenosylmethionine synthase (410 aa).

An ATP-binding site is contributed by histidine 15. Residue aspartate 17 coordinates Mg(2+). Glutamate 43 is a binding site for K(+). Residues glutamate 56 and glutamine 100 each coordinate L-methionine. A flexible loop region spans residues 100 to 110; it reads QSPDIAKGVDT. ATP-binding positions include 171–173, 248–249, aspartate 257, 263–264, alanine 280, and lysine 284; these read DGK, KF, and RK. L-methionine is bound at residue aspartate 257. Lysine 288 serves as a coordination point for L-methionine.

The protein belongs to the AdoMet synthase family. In terms of assembly, homotetramer; dimer of dimers. The cofactor is Mg(2+). K(+) serves as cofactor.

Its subcellular location is the cytoplasm. It catalyses the reaction L-methionine + ATP + H2O = S-adenosyl-L-methionine + phosphate + diphosphate. It participates in amino-acid biosynthesis; S-adenosyl-L-methionine biosynthesis; S-adenosyl-L-methionine from L-methionine: step 1/1. Catalyzes the formation of S-adenosylmethionine (AdoMet) from methionine and ATP. The overall synthetic reaction is composed of two sequential steps, AdoMet formation and the subsequent tripolyphosphate hydrolysis which occurs prior to release of AdoMet from the enzyme. This Prochlorococcus marinus (strain MIT 9211) protein is S-adenosylmethionine synthase.